Here is a 279-residue protein sequence, read N- to C-terminus: 4-diphosphocytidyl-2-C-methyl-D-erythritol kinase (279 aa).

The active site involves lysine 11. 95–105 provides a ligand contact to ATP; the sequence is PVAAGLGGGSS. Aspartate 137 is an active-site residue.

This sequence belongs to the GHMP kinase family. IspE subfamily.

It carries out the reaction 4-CDP-2-C-methyl-D-erythritol + ATP = 4-CDP-2-C-methyl-D-erythritol 2-phosphate + ADP + H(+). Its pathway is isoprenoid biosynthesis; isopentenyl diphosphate biosynthesis via DXP pathway; isopentenyl diphosphate from 1-deoxy-D-xylulose 5-phosphate: step 3/6. Functionally, catalyzes the phosphorylation of the position 2 hydroxy group of 4-diphosphocytidyl-2C-methyl-D-erythritol. This Geobacter sulfurreducens (strain ATCC 51573 / DSM 12127 / PCA) protein is 4-diphosphocytidyl-2-C-methyl-D-erythritol kinase.